The following is a 308-amino-acid chain: UDP-N-acetylenolpyruvoylglucosamine reductase (308 aa).

The FAD-binding PCMH-type domain maps to 24 to 187; sequence RVGGPADWLF…VSASLQGVPG (164 aa). Arginine 167 is an active-site residue. Residues 199–230 are disordered; sequence QLDKRDQTQPTKERSAGSTFRNPAGFSSTGRA. The segment covering 200–213 has biased composition (basic and acidic residues); that stretch reads LDKRDQTQPTKERS. Over residues 214-228 the composition is skewed to polar residues; it reads AGSTFRNPAGFSSTG. Serine 216 (proton donor) is an active-site residue. The active site involves glutamate 298.

The protein belongs to the MurB family. FAD is required as a cofactor.

The protein resides in the cytoplasm. The catalysed reaction is UDP-N-acetyl-alpha-D-muramate + NADP(+) = UDP-N-acetyl-3-O-(1-carboxyvinyl)-alpha-D-glucosamine + NADPH + H(+). Its pathway is cell wall biogenesis; peptidoglycan biosynthesis. Cell wall formation. This is UDP-N-acetylenolpyruvoylglucosamine reductase from Ruegeria pomeroyi (strain ATCC 700808 / DSM 15171 / DSS-3) (Silicibacter pomeroyi).